The chain runs to 632 residues: MAU2 chromatid cohesion factor homolog (632 aa).

2 TPR repeats span residues 453-486 and 493-526; these read GGFY…ANAE and SCSL…ASKI.

This sequence belongs to the SCC4/mau-2 family. In terms of assembly, interacts with Nipped-B to form the cohesin loading complex.

The protein resides in the nucleus. It localises to the nucleoplasm. Its function is as follows. Required for association of the cohesin complex with chromatin during interphase. Plays a role in sister chromatid cohesion and normal progression through prometaphase. The polypeptide is MAU2 chromatid cohesion factor homolog (Drosophila simulans (Fruit fly)).